The primary structure comprises 344 residues: MKLAILGAGCYRTHAASGITNFSRACEVAEMVGKPEIAMTHSTITMGAELKELAGVDEVVVADPVFDNQFTVIDDFAYEDVIEAHKEDPEKIMPQIREKVNEVAKELPKPPEGAIHFTHPEDLGFEITTDDREAVADADFIMTWFPKGDMQPDIINKFIDDIKPGAIVTHACTIPTTKFYKIFEQKHGDLVTKPETLNVTSYHPGAVPEMKGQVYIAEGYASEDAIETLFELGQKARGNAYRLPAELLGPVCDMCSALTAITYAGILSYRDSVTQVLGAPASFAQMMAKESLEQITALMEKVGIDKMEENLDPGALLGTADSMNFGASAEILPTVFEILEKRKK.

It belongs to the HMD family. In terms of assembly, homotetramer.

The catalysed reaction is 5,10-methenyl-5,6,7,8-tetrahydromethanopterin + H2 = 5,10-methylenetetrahydromethanopterin + H(+). The protein operates within one-carbon metabolism; methanogenesis from CO(2); 5,10-methylene-5,6,7,8-tetrahydromethanopterin from 5,10-methenyl-5,6,7,8-tetrahydromethanopterin (hydrogen route): step 1/1. With respect to regulation, activity requires salt; 100 mM sodium or potassium salts of chloride, phosphate or sulfate are equally effective. Inactivated by O(2). Functionally, catalyzes the reversible reduction of methenyl-H(4)MPT(+) to methylene-H(4)MPT. In Methanothermobacter marburgensis (strain ATCC BAA-927 / DSM 2133 / JCM 14651 / NBRC 100331 / OCM 82 / Marburg) (Methanobacterium thermoautotrophicum), this protein is 5,10-methenyltetrahydromethanopterin hydrogenase.